The primary structure comprises 218 residues: Thiopurine S-methyltransferase (218 aa).

S-adenosyl-L-methionine-binding residues include Trp10, Leu45, Glu66, and Arg123.

Belongs to the class I-like SAM-binding methyltransferase superfamily. TPMT family.

The protein localises to the cytoplasm. The catalysed reaction is S-adenosyl-L-methionine + a thiopurine = S-adenosyl-L-homocysteine + a thiopurine S-methylether.. This Shewanella sp. (strain ANA-3) protein is Thiopurine S-methyltransferase.